We begin with the raw amino-acid sequence, 448 residues long: MLRAVSTSFGTARAASAVAKKNMPNIVLVDAVRTPFVVSGTVFKDLMAVDLQKEAIKALVEKTKLPYEQLDHIICGTVIQECKTSNIAREAALLAGVPDKIPAHTVTLACISSNVAMTTGMGMLATGNANAIIAGGVELLSDVPIRYNRNARKAMLGMNKAKDVPSKLKIGGQIVKNLLSPELPAVAEFSTGETMGHSGDRLAAAFNVSRREQDEFAIRSHTLASEAAKNGKFTDVVPVFLDGKKPKTIKEDNGIRVSTLEKLSSLKPAFVKPHGTVTAANASYLTDGASAALIMTEEYALANGYKPKAYLRDYLYVAQDPKDQLLLSPAYVIPKLLDKAGLTLKDVDVFEIHEAFAGQVLANLNAMDSDYFCKEQMKRSGKFGRVPMDKLNLWGGSLSIGHPFGATGVRLATHSAHRLKEEKGQYAVIAACAAGGHGVGMLIEAYGK.

C110 (acyl-thioester intermediate) is an active-site residue. Active-site proton acceptor residues include H402 and C432.

It belongs to the thiolase-like superfamily. Thiolase family.

The protein resides in the mitochondrion. It catalyses the reaction an acyl-CoA + acetyl-CoA = a 3-oxoacyl-CoA + CoA. Its pathway is lipid metabolism; fatty acid beta-oxidation. Its function is as follows. Mitochondrial enzyme that catalyzes reactions of the mitochondrial beta-oxidation pathway. This is Probable 3-ketoacyl-CoA thiolase from Caenorhabditis elegans.